Reading from the N-terminus, the 318-residue chain is Pantothenate kinase (318 aa).

96-103 provides a ligand contact to ATP; the sequence is GSVAVGKS.

Belongs to the prokaryotic pantothenate kinase family.

The protein localises to the cytoplasm. The catalysed reaction is (R)-pantothenate + ATP = (R)-4'-phosphopantothenate + ADP + H(+). The protein operates within cofactor biosynthesis; coenzyme A biosynthesis; CoA from (R)-pantothenate: step 1/5. This chain is Pantothenate kinase, found in Rhodopseudomonas palustris (strain ATCC BAA-98 / CGA009).